The following is a 202-amino-acid chain: Neuroligin-3 (202 aa).

Over Arg1–Trp202 the chain is Extracellular. The cysteines at positions 15 and 49 are disulfide-linked. The N-linked (GlcNAc...) asparagine glycan is linked to Asn50. A disordered region spans residues Leu154 to Trp202.

The protein belongs to the type-B carboxylesterase/lipase family. As to quaternary structure, homodimer, and heterodimer with NLGN1 and NLGN2. Interacts with neurexins NRXN1, NRXN2 and NRXN3. Interaction with neurexins is mediated by heparan sulfate glycan modification on neurexin. Interacts (via its C-terminus) with DLG4/PSD-95 (via PDZ domain 3).

It is found in the cell membrane. It localises to the synapse. Its function is as follows. Cell surface protein involved in cell-cell-interactions via its interactions with neurexin family members. Plays a role in synapse function and synaptic signal transmission, and probably mediates its effects by recruiting and clustering other synaptic proteins. May promote the initial formation of synapses, but is not essential for this. May also play a role in glia-glia or glia-neuron interactions in the developing peripheral nervous system. The chain is Neuroligin-3 (NLGN3) from Macaca mulatta (Rhesus macaque).